A 788-amino-acid polypeptide reads, in one-letter code: Calpastatin (788 aa).

The span at 1–11 (MSQPGPKPAAS) shows a compositional bias: pro residues. Disordered stretches follow at residues 1-262 (MSQP…TGPV), 289-493 (LLEK…MCSI), and 514-580 (TLAG…SQEQ). Ser-11 bears the Phosphoserine mark. Low complexity predominate over residues 12-21 (PRPSRGAAAR). Residues 38–49 (PGEKKGSDEKKA) are compositionally biased toward basic and acidic residues. Over residues 65-87 (AATATKVTASSAATSKSPSMSTT) the composition is skewed to low complexity. Residues 99–119 (EGPDQKRPREQAVKTESKKPQ) are compositionally biased toward basic and acidic residues. Lys-112 participates in a covalent cross-link: Glycyl lysine isopeptide (Lys-Gly) (interchain with G-Cter in SUMO2). Residue Lys-129 is modified to N6-acetyllysine. A Phosphoserine modification is found at Ser-165. Thr-216 is subject to Phosphothreonine. Phosphoserine is present on Ser-219. Basic and acidic residues predominate over residues 246–256 (GGHEDTNRDDP). Residues 251-303 (TNRDDPPYTGPVVLDPMYSTYLEALGIKEGTIPPEYRKLLEKNEGITQPLPDS) form an Inhibitory domain 1 repeat. Phosphoserine is present on residues Ser-303 and Ser-324. 2 stretches are compositionally biased toward polar residues: residues 318-328 (SDFTCSSPTGK) and 369-380 (QALQALSDSLGT). The Inhibitory domain 2 repeat unit spans residues 384 to 436 (DPPSHVSQAEQVKEAKAKEERQEKCGEDEDTVPAEYRLKPAKDKDGKPLLPEP). 2 stretches are compositionally biased toward basic and acidic residues: residues 394–408 (QVKE…QEKC) and 419–430 (YRLKPAKDKDGK). Over residues 441-453 (KSLSESELIGELS) the composition is skewed to low complexity. Phosphoserine occurs at positions 444, 446, and 453. Thr-479 is modified (phosphothreonine). Ser-518 carries the phosphoserine modification. The span at 522–570 (READPEHEKTVEDKVKEKAKEEEHEKLGEKEETVPPDYRLEEVKDKDGK) shows a compositional bias: basic and acidic residues. The Inhibitory domain 3 repeat unit spans residues 524–577 (ADPEHEKTVEDKVKEKAKEEEHEKLGEKEETVPPDYRLEEVKDKDGKPLLPKES). Phosphoserine occurs at positions 594, 605, 653, and 655. Residues 620–788 (VVSQTPAPST…PKAKEDARHS (169 aa)) form a disordered region. An Inhibitory domain 4 repeat occupies 661 to 714 (PDPDENKPLDDKVKEKIKPEHSEKLGERDDTIPPEYRHLLDNDGKDKPEKPPTK). Basic and acidic residues-rich tracts occupy residues 661–726 (PDPD…RDPI) and 759–788 (ASKD…ARHS).

It belongs to the protease inhibitor I27 (calpastatin) family. In terms of tissue distribution, isoform 2 is the major form in all tissues examined. Isoform 1 accounts for 5-10% in tissues such as skeletal muscle, liver and brain, and 30% in myoblasts. Isoforms 4 and 5 are testis-specific. Isoform 6 is highly expressed in heart and skeletal muscle with lower levels in liver, brain and testis. Isoform 7 is expressed at high levels in liver.

Specific inhibition of calpain (calcium-dependent cysteine protease). Plays a key role in postmortem tenderization of meat and have been proposed to be involved in muscle protein degradation in living tissue. The protein is Calpastatin (Cast) of Mus musculus (Mouse).